The following is a 155-amino-acid chain: Xanthine-guanine phosphoribosyltransferase (155 aa).

Residues 37 to 38 and 91 to 99 each bind 5-phospho-alpha-D-ribose 1-diphosphate; these read RG and DDLVDTGNT. D92 contributes to the Mg(2+) binding site. The guanine site is built by D95 and I138. Residues D95 and I138 each coordinate xanthine. Residues 95–99 and 137–138 contribute to the GMP site; these read DTGNT and WI.

The protein belongs to the purine/pyrimidine phosphoribosyltransferase family. XGPT subfamily. In terms of assembly, homotetramer. Mg(2+) serves as cofactor.

It is found in the cell inner membrane. The catalysed reaction is GMP + diphosphate = guanine + 5-phospho-alpha-D-ribose 1-diphosphate. It carries out the reaction XMP + diphosphate = xanthine + 5-phospho-alpha-D-ribose 1-diphosphate. The enzyme catalyses IMP + diphosphate = hypoxanthine + 5-phospho-alpha-D-ribose 1-diphosphate. It functions in the pathway purine metabolism; GMP biosynthesis via salvage pathway; GMP from guanine: step 1/1. Its pathway is purine metabolism; XMP biosynthesis via salvage pathway; XMP from xanthine: step 1/1. In terms of biological role, acts on guanine, xanthine and to a lesser extent hypoxanthine. Functionally, purine salvage pathway enzyme that catalyzes the transfer of the ribosyl-5-phosphate group from 5-phospho-alpha-D-ribose 1-diphosphate (PRPP) to the N9 position of the 6-oxopurines guanine and xanthine to form the corresponding ribonucleotides GMP (guanosine 5'-monophosphate) and XMP (xanthosine 5'-monophosphate), with the release of PPi. To a lesser extent, also acts on hypoxanthine. The protein is Xanthine-guanine phosphoribosyltransferase of Haemophilus influenzae (strain ATCC 51907 / DSM 11121 / KW20 / Rd).